A 100-amino-acid polypeptide reads, in one-letter code: Urease subunit gamma (100 aa).

Belongs to the urease gamma subunit family. In terms of assembly, heterotrimer of UreA (gamma), UreB (beta) and UreC (alpha) subunits. Three heterotrimers associate to form the active enzyme.

The protein resides in the cytoplasm. The catalysed reaction is urea + 2 H2O + H(+) = hydrogencarbonate + 2 NH4(+). It participates in nitrogen metabolism; urea degradation; CO(2) and NH(3) from urea (urease route): step 1/1. The chain is Urease subunit gamma from Frankia alni (strain DSM 45986 / CECT 9034 / ACN14a).